The sequence spans 469 residues: MLNIKLNIVILAAGKSTRMNSDIPKVLHLLAGKPILQYVIDTAIKLKAKCKSTNIYIVYGYKGELLQQKLAHKQKTFLHWIKQVEQSGTGHAVQQVLPFLGKDEEVLILYGDVPLISFQTLIHLLTTRSKQGLSLLTANLTNPDGYGRILYKEQEVVGIIEHQEANAQQKLISEINTGILAVSSNELKIWITKLTNNNSMNEFYLTDIIALAWQEGKKIHTIHPEKISEINGINDCAQLANLERLYQKEQAESLLRIGVIIADPNRFDLRGELKHGDNIFFDTNVLIEGQVSLGNQVTIGTGCIIKNTVIGDNVIIKPYSIIEEAHLANGSIVGPFAHLRPGSKIEENAYVGNFVEIKKSTLGKKSKVAHLSYIGDANIGKDVNIGAGTITCNYDGANKHQTIIGDNVFIGSDSQLIAPLTIGDGATIGAGTTVTSNVTSNEVIISRIRQFPIINWQRPKKKIRYNIIY.

Positions 1–236 (MLNIKLNIVI…ISEINGINDC (236 aa)) are pyrophosphorylase. UDP-N-acetyl-alpha-D-glucosamine-binding positions include 11–14 (LAAG), K25, Q83, 88–89 (GT), 110–112 (YGD), G147, E161, N176, and N234. D112 is a Mg(2+) binding site. Mg(2+) is bound at residue N234. Residues 237 to 257 (AQLANLERLYQKEQAESLLRI) form a linker region. Positions 258 to 469 (GVIIADPNRF…KKKIRYNIIY (212 aa)) are N-acetyltransferase. UDP-N-acetyl-alpha-D-glucosamine is bound by residues R340 and K358. The active-site Proton acceptor is the H370. UDP-N-acetyl-alpha-D-glucosamine-binding residues include Y373 and N384. Acetyl-CoA is bound by residues A387, 393 to 394 (NY), S412, A430, and R447.

The protein in the N-terminal section; belongs to the N-acetylglucosamine-1-phosphate uridyltransferase family. This sequence in the C-terminal section; belongs to the transferase hexapeptide repeat family. As to quaternary structure, homotrimer. It depends on Mg(2+) as a cofactor.

The protein localises to the cytoplasm. It catalyses the reaction alpha-D-glucosamine 1-phosphate + acetyl-CoA = N-acetyl-alpha-D-glucosamine 1-phosphate + CoA + H(+). The enzyme catalyses N-acetyl-alpha-D-glucosamine 1-phosphate + UTP + H(+) = UDP-N-acetyl-alpha-D-glucosamine + diphosphate. Its pathway is nucleotide-sugar biosynthesis; UDP-N-acetyl-alpha-D-glucosamine biosynthesis; N-acetyl-alpha-D-glucosamine 1-phosphate from alpha-D-glucosamine 6-phosphate (route II): step 2/2. It participates in nucleotide-sugar biosynthesis; UDP-N-acetyl-alpha-D-glucosamine biosynthesis; UDP-N-acetyl-alpha-D-glucosamine from N-acetyl-alpha-D-glucosamine 1-phosphate: step 1/1. The protein operates within bacterial outer membrane biogenesis; LPS lipid A biosynthesis. Functionally, catalyzes the last two sequential reactions in the de novo biosynthetic pathway for UDP-N-acetylglucosamine (UDP-GlcNAc). The C-terminal domain catalyzes the transfer of acetyl group from acetyl coenzyme A to glucosamine-1-phosphate (GlcN-1-P) to produce N-acetylglucosamine-1-phosphate (GlcNAc-1-P), which is converted into UDP-GlcNAc by the transfer of uridine 5-monophosphate (from uridine 5-triphosphate), a reaction catalyzed by the N-terminal domain. The polypeptide is Bifunctional protein GlmU (Baumannia cicadellinicola subsp. Homalodisca coagulata).